A 286-amino-acid chain; its full sequence is ATP synthase gamma chain (286 aa).

It belongs to the ATPase gamma chain family. F-type ATPases have 2 components, CF(1) - the catalytic core - and CF(0) - the membrane proton channel. CF(1) has five subunits: alpha(3), beta(3), gamma(1), delta(1), epsilon(1). CF(0) has three main subunits: a, b and c.

The protein resides in the cell inner membrane. Produces ATP from ADP in the presence of a proton gradient across the membrane. The gamma chain is believed to be important in regulating ATPase activity and the flow of protons through the CF(0) complex. This Flavobacterium psychrophilum (strain ATCC 49511 / DSM 21280 / CIP 103535 / JIP02/86) protein is ATP synthase gamma chain.